A 291-amino-acid chain; its full sequence is 4-hydroxy-tetrahydrodipicolinate synthase (291 aa).

Thr44 provides a ligand contact to pyruvate. Tyr132 functions as the Proton donor/acceptor in the catalytic mechanism. Lys160 functions as the Schiff-base intermediate with substrate in the catalytic mechanism. Position 202 (Ile202) interacts with pyruvate.

This sequence belongs to the DapA family. In terms of assembly, homotetramer; dimer of dimers.

The protein resides in the cytoplasm. It carries out the reaction L-aspartate 4-semialdehyde + pyruvate = (2S,4S)-4-hydroxy-2,3,4,5-tetrahydrodipicolinate + H2O + H(+). The protein operates within amino-acid biosynthesis; L-lysine biosynthesis via DAP pathway; (S)-tetrahydrodipicolinate from L-aspartate: step 3/4. Functionally, catalyzes the condensation of (S)-aspartate-beta-semialdehyde [(S)-ASA] and pyruvate to 4-hydroxy-tetrahydrodipicolinate (HTPA). This Zymomonas mobilis subsp. mobilis (strain ATCC 31821 / ZM4 / CP4) protein is 4-hydroxy-tetrahydrodipicolinate synthase.